The primary structure comprises 351 residues: Nitronate monooxygenase (351 aa).

Residues L21, N69, Q176, G181, G218, and 237-240 (QMGT) contribute to the FMN site.

The protein belongs to the nitronate monooxygenase family. NMO class I subfamily. FMN serves as cofactor.

It carries out the reaction 3 propionate 3-nitronate + 3 O2 + H2O = 3 3-oxopropanoate + 2 nitrate + nitrite + H2O2 + 3 H(+). Functionally, nitronate monooxygenase that uses molecular oxygen to catalyze the oxidative denitrification of alkyl nitronates. The toxin propionate 3-nitronate (P3N) is the best substrate (and the presumed physiological substrate), but this enzyme is also active on other primary and secondary nitronates such as propyl-1-nitronate, ethylnitronate, pentyl-1-nitronate, butyl-1-nitronate and propyl-2-nitronate. Is likely involved in the degradation of P3N, that allows P.aeruginosa PAO1 to grow on 3-nitropropionate/P3N as the sole nitrogen source. Also functions in the detoxification of P3N, a metabolic poison produced by plants and fungi as a defense mechanism. Cannot oxidize nitroalkanes such as 3-nitropropionate, nitroethane, 1-nitropropane, 1-nitrobutane, 1-nitropentane, or 2-nitropropane. The sequence is that of Nitronate monooxygenase from Pseudomonas aeruginosa (strain ATCC 15692 / DSM 22644 / CIP 104116 / JCM 14847 / LMG 12228 / 1C / PRS 101 / PAO1).